Reading from the N-terminus, the 185-residue chain is uncharacterized protein (185 aa).

This is an uncharacterized protein from Escherichia coli (strain K12).